A 484-amino-acid polypeptide reads, in one-letter code: Allantoinase, mitochondrial (484 aa).

Residues H76, H78, K163, H199, H251, and D324 each contribute to the Zn(2+) site. K163 is subject to N6-carboxylysine.

Belongs to the metallo-dependent hydrolases superfamily. Allantoinase family. Homotetramer. The cofactor is Zn(2+). Post-translationally, carboxylation allows a single lysine to coordinate two zinc ions. In terms of tissue distribution, liver and kidney.

It localises to the mitochondrion. It catalyses the reaction (S)-allantoin + H2O = allantoate + H(+). The protein operates within nitrogen metabolism; (S)-allantoin degradation; allantoate from (S)-allantoin: step 1/1. In Aquarana catesbeiana (American bullfrog), this protein is Allantoinase, mitochondrial (ALN).